We begin with the raw amino-acid sequence, 289 residues long: Somatostatin-like receptor F_48D10.1 (289 aa).

Residues 1–57 lie on the Extracellular side of the membrane; sequence MEPLDQTPGFPLSPEPNYWYETTPSLLLVSYPHLLDISSNQSTQSVPFQGSSALLTA. Asn40 is a glycosylation site (N-linked (GlcNAc...) asparagine). A helical membrane pass occupies residues 58 to 79; it reads VIYITVFVVGLTGNTLAIYVVL. At 80 to 89 the chain is on the cytoplasmic side; the sequence is RYAGMKTVTN. A helical transmembrane segment spans residues 90-110; sequence IYILNLAVADELYIVGLPFLA. Residues 111–126 lie on the Extracellular side of the membrane; sequence TQNVLSYWPFGSFLCR. An intrachain disulfide couples Cys125 to Cys221. Residues 127 to 148 traverse the membrane as a helical segment; it reads VVMTADSMNQFTSIFCLTVMSI. Residues 149-170 lie on the Cytoplasmic side of the membrane; sequence DRYLAVVHPIRSTKWRHPRVAK. The helical transmembrane segment at 171-191 threads the bilayer; it reads VVSAAVWAVSFVVVLPVVIFS. At 192–240 the chain is on the extracellular side; it reads DVQVRPSRPLQVGTSSKCLVKRVQETFNSCNMIWPEPKNVWSTAFILYT. The chain crosses the membrane as a helical span at residues 241–261; it reads AMVGFFGPLLIICLCYLLIVI. Topologically, residues 262–289 are cytoplasmic; it reads KVRHRMSAAQVGAVVSTCPLNICCLSRR.

This sequence belongs to the G-protein coupled receptor 1 family.

The protein localises to the cell membrane. This chain is Somatostatin-like receptor F_48D10.1, found in Takifugu rubripes (Japanese pufferfish).